The sequence spans 190 residues: Glycerol-3-phosphate acyltransferase 2 (190 aa).

5 helical membrane-spanning segments follow: residues 1 to 21 (MNILTLILSYLIGSISFALIV), 53 to 73 (VIVAIADILKGTFACLLPLIL), 76 to 96 (TINPIVCGLLAILGHIFSVFA), 110 to 130 (VFLFLSPLGVLVGFVVFVLTL), and 152 to 172 (LIFEDKVIIALSLLIIVSIII).

The protein belongs to the PlsY family. In terms of assembly, probably interacts with PlsX.

The protein resides in the cell membrane. The catalysed reaction is an acyl phosphate + sn-glycerol 3-phosphate = a 1-acyl-sn-glycero-3-phosphate + phosphate. It functions in the pathway lipid metabolism; phospholipid metabolism. Functionally, catalyzes the transfer of an acyl group from acyl-phosphate (acyl-PO(4)) to glycerol-3-phosphate (G3P) to form lysophosphatidic acid (LPA). This enzyme utilizes acyl-phosphate as fatty acyl donor, but not acyl-CoA or acyl-ACP. The chain is Glycerol-3-phosphate acyltransferase 2 from Bacillus anthracis.